Consider the following 1939-residue polypeptide: Myosin-6 (1939 aa).

Residues 32-81 (DIRTECFVPDDKEEFVKAKILSREGGKVIAETENGKTVTVKEDQVLQQNP) form the Myosin N-terminal SH3-like domain. In terms of domain architecture, Myosin motor spans 85-780 (DKIEDMAMLT…LLGLLEEMRD (696 aa)). Lysine 129 bears the N6,N6,N6-trimethyllysine mark. 178–185 (GESGAGKT) lines the ATP pocket. The residue at position 379 (threonine 379) is a Phosphothreonine. Serine 417 carries the post-translational modification Phosphoserine. Actin-binding regions lie at residues 657 to 679 (LNKLMTNLRTTHPHFVRCIIPNE) and 759 to 773 (KFGHTKVFFKAGLLG). The IQ domain maps to 783–812 (LSRIITRMQAQARGQLMRIEFKKIVERRDA). A coiled-coil region spans residues 842–1939 (LKSAETEKEM…GAKQKMHDEE (1098 aa)). Residue serine 1139 is modified to Phosphoserine. Tyrosine 1261 carries the post-translational modification Phosphotyrosine. A Phosphoserine modification is found at serine 1271. Threonine 1277 and threonine 1284 each carry phosphothreonine. Serine 1309 carries the post-translational modification Phosphoserine. Phosphotyrosine is present on tyrosine 1310. Threonine 1311 is subject to Phosphothreonine. Serine 1512 bears the Phosphoserine mark. Phosphothreonine is present on threonine 1515. Basic and acidic residues-rich tracts occupy residues 1826-1837 (GELEAEQKRNAE) and 1925-1939 (KSRDIGAKQKMHDEE). Disordered stretches follow at residues 1826 to 1849 (GELEAEQKRNAESVKGMRKSERRI) and 1909 to 1939 (EERADIAESQVNKLRAKSRDIGAKQKMHDEE).

The protein belongs to the TRAFAC class myosin-kinesin ATPase superfamily. Myosin family. Muscle myosin is a hexameric protein that consists of 2 heavy chain subunits (MHC), 2 alkali light chain subunits (MLC) and 2 regulatory light chain subunits (MLC-2).

Its subcellular location is the cytoplasm. The protein localises to the myofibril. Its function is as follows. Muscle contraction. The sequence is that of Myosin-6 (MYH6) from Homo sapiens (Human).